Here is a 621-residue protein sequence, read N- to C-terminus: Phosphoenolpyruvate carboxykinase [GTP] (621 aa).

Substrate-binding positions include Arg-82 and 220 to 222; that span reads YGG. Residues Lys-229 and His-249 each contribute to the Mn(2+) site. Substrate is bound at residue Ser-271. 272–277 contributes to the GTP binding site; that stretch reads QCGKTN. The active site involves Cys-273. Asp-296 is a binding site for Mn(2+). Substrate is bound at residue 386–388; that stretch reads NSR. Residues Arg-388, Arg-419, and 514 to 517 each bind GTP; that span reads FGEN.

It belongs to the phosphoenolpyruvate carboxykinase [GTP] family. As to quaternary structure, monomer. Mn(2+) serves as cofactor.

The protein localises to the cytoplasm. The catalysed reaction is oxaloacetate + GTP = phosphoenolpyruvate + GDP + CO2. Its pathway is carbohydrate biosynthesis; gluconeogenesis. Functionally, catalyzes the conversion of oxaloacetate (OAA) to phosphoenolpyruvate (PEP), the rate-limiting step in the metabolic pathway that produces glucose from lactate and other precursors derived from the citric acid cycle. This chain is Phosphoenolpyruvate carboxykinase [GTP], found in Corynebacterium kroppenstedtii (strain DSM 44385 / JCM 11950 / CIP 105744 / CCUG 35717).